The following is a 589-amino-acid chain: Sulfite reductase [NADPH] hemoprotein beta-component (589 aa).

Positions 443, 449, 488, and 492 each coordinate [4Fe-4S] cluster. Cys492 is a siroheme binding site.

Belongs to the nitrite and sulfite reductase 4Fe-4S domain family. Alpha(8)-beta(8). The alpha component is a flavoprotein, the beta component is a hemoprotein. Siroheme serves as cofactor. Requires [4Fe-4S] cluster as cofactor.

The enzyme catalyses hydrogen sulfide + 3 NADP(+) + 3 H2O = sulfite + 3 NADPH + 4 H(+). The protein operates within sulfur metabolism; hydrogen sulfide biosynthesis; hydrogen sulfide from sulfite (NADPH route): step 1/1. Component of the sulfite reductase complex that catalyzes the 6-electron reduction of sulfite to sulfide. This is one of several activities required for the biosynthesis of L-cysteine from sulfate. The protein is Sulfite reductase [NADPH] hemoprotein beta-component of Neisseria meningitidis serogroup C / serotype 2a (strain ATCC 700532 / DSM 15464 / FAM18).